A 131-amino-acid chain; its full sequence is Small ribosomal subunit protein uS11 (131 aa).

The span at 1-15 (MAAQKVKKTRRRKER) shows a compositional bias: basic residues. Residues 1 to 23 (MAAQKVKKTRRRKERKNVEHGAA) form a disordered region.

This sequence belongs to the universal ribosomal protein uS11 family. Part of the 30S ribosomal subunit. Interacts with proteins S7 and S18. Binds to IF-3.

Located on the platform of the 30S subunit, it bridges several disparate RNA helices of the 16S rRNA. Forms part of the Shine-Dalgarno cleft in the 70S ribosome. The protein is Small ribosomal subunit protein uS11 of Clostridium perfringens (strain 13 / Type A).